The primary structure comprises 570 residues: FERM domain-containing protein 5 (570 aa).

An FERM domain is found at 17 to 298; that stretch reads YSCTVRLLDD…ENQAFYKLEK (282 aa). The segment at 308 to 353 is interaction with ROCK1; sequence SNLFFKGSRFRYSGRVAKEVMESSAKIKREPPEIHRAGMVPSRSCP. Residues 344-367 are disordered; the sequence is AGMVPSRSCPSITHGPRLSSVPRT. Ser375 carries the post-translational modification Phosphoserine. The interval 385-407 is disordered; the sequence is DSAHSTPVRSTSHGDTFLPHVRS. The span at 388-398 shows a compositional bias: polar residues; that stretch reads HSTPVRSTSHG. The helical transmembrane segment at 504-524 threads the bilayer; the sequence is LLLVTMGLLFVLLLLLIILTE.

As to quaternary structure, interacts with CTNND1. Interacts with ITGB5 (via cytoplasmic domain) and ROCK1.

The protein resides in the membrane. Its subcellular location is the cell junction. It is found in the adherens junction. In terms of biological role, may be involved in regulation of cell migration. May regulate cell-matrix interactions via its interaction with ITGB5 and modifying ITGB5 cytoplasmic tail interactions such as with FERMT2 and TLN1. May regulate ROCK1 kinase activity possibly involved in regulation of actin stress fiber formation. In Homo sapiens (Human), this protein is FERM domain-containing protein 5 (FRMD5).